Consider the following 1429-residue polypeptide: Autophagy-related protein 11 (1429 aa).

The interval 71–99 is disordered; that stretch reads TQRSQPGASSPPLSELPLPRYNAHTPPNS. The span at 80–89 shows a compositional bias: low complexity; it reads SPPLSELPLP. Coiled coils occupy residues 143 to 173, 553 to 590, 632 to 815, and 851 to 989; these read VMLRCLDAAVANLENAVKGLENKYVELKEWS, DDLLRSLQADKTRLESKLKTAESRVRRLEDLLHRQTQA, LETL…LEDI, and EGDM…RLES. The interval 1024 to 1061 is disordered; sequence DGTMHIQRTPRSERSLATTANPNDSDPSSSLRRSSTLN. Residues 1042-1061 are compositionally biased toward low complexity; sequence TANPNDSDPSSSLRRSSTLN. Residues 1105–1143 adopt a coiled-coil conformation; sequence ADAVYRRVKDVEHMARKLQREARAYREKAHSFQKEAHDK. Positions 1209–1229 are enriched in basic and acidic residues; that stretch reads SKSLQHDQAGETRKDGARGET. Disordered regions lie at residues 1209–1241 and 1336–1429; these read SKSLQHDQAGETRKDGARGETESLDDDENDNPF and SSRG…LIGP. Over residues 1230 to 1239 the composition is skewed to acidic residues; sequence ESLDDDENDN. Polar residues-rich tracts occupy residues 1345–1372 and 1383–1393; these read ASETNSLRAVPADNNSSAPTNAAQQHMS and QETPQQTNSIS.

The protein belongs to the ATG11 family. As to quaternary structure, homodimer.

It is found in the preautophagosomal structure membrane. Its subcellular location is the vacuole membrane. Involved in cytoplasm to vacuole transport (Cvt), pexophagy, mitophagy and nucleophagy. Recruits mitochondria for their selective degradation via autophagy (mitophagy) during starvation. Works as scaffold proteins that recruit ATG proteins to the pre-autophagosome (PAS), the site of vesicle/autophagosome formation. Required for the Cvt vesicles completion. This chain is Autophagy-related protein 11 (apg-8), found in Neurospora crassa (strain ATCC 24698 / 74-OR23-1A / CBS 708.71 / DSM 1257 / FGSC 987).